A 448-amino-acid chain; its full sequence is DEAD-box ATP-dependent RNA helicase CshB (448 aa).

Residues 4-32 (HPFEQFNLESSLIDAVKDLNFEKPTEIQN) carry the Q motif motif. One can recognise a Helicase ATP-binding domain in the interval 35 to 206 (IPRILKRTNL…NKYLSHPEYV (172 aa)). ATP is bound at residue 48 to 55 (SQTGTGKS). A DEAD box motif is present at residues 154–157 (DEAD). Residues 236-386 (NLIDILNPYL…EVKAHNQRQA (151 aa)) enclose the Helicase C-terminal domain. Residues 400 to 418 (NKVRSKIKNKVKPGYKKKF) are compositionally biased toward basic residues. Residues 400–448 (NKVRSKIKNKVKPGYKKKFKQEVEKMKRQERKQFSKQQNRQKRKQNKKG) form a disordered region. The segment covering 419-432 (KQEVEKMKRQERKQ) has biased composition (basic and acidic residues). The segment covering 438–448 (NRQKRKQNKKG) has biased composition (basic residues).

The protein belongs to the DEAD box helicase family. CshB subfamily.

It is found in the cytoplasm. The catalysed reaction is ATP + H2O = ADP + phosphate + H(+). Its function is as follows. Probable DEAD-box RNA helicase. May work in conjunction with the cold shock proteins to ensure proper initiation of transcription at low and optimal temperatures. The sequence is that of DEAD-box ATP-dependent RNA helicase CshB from Staphylococcus aureus (strain NCTC 8325 / PS 47).